The primary structure comprises 1240 residues: MFPYPTLNYPPMAPINPMAYRDPNPPRQVAPFRPPLAAQIEDLRRSIANLTLKQRAPNPPAGPPAKRKKPAPKPKPAQAKKKRPPPPAKKQKRKPKPGKRQRMCMKLESDKTFPIMLNGQVNGYACVVGGRVFKPLHVEGRIDNEQLAAIKLKKASIYDLEYGDVPQCMKSDTLQYTSDKPPGFYNWHHGAVQYENNRFTVPRGVGGKGDSGRPILDNKGRVVAIVLGGVNEGSRTALSVVTWNQKGVTVKDTPEGSEPWSLATVMCVLANITFPCDQPPCMPCCYEKNPHETLTMLEQNYDSRAYDQLLDAAVKCNARRTRRDLDTHFTQYKLARPYIADCPNCGHSRCDSPIAIEEVRGDAHAGVIRIQTSAMFGLKTDGVDLAYMSFMNGKTQKSIKIDNLHVRTSAPCSLVSHHGYYILAQCPPGDTVTVGFHDGPNRHTCTVAHKVEFRPVGREKYRHPPEHGVELPCNRYTHKRADQGHYVEMHQPGLVADHSLLSIHSAKVKITVPSGAQVKYYCKCPDVREGITSSDHTTTCTDVKQCRAYLIGNKKWVYNSGRLPRGEGDTFKGKLHVPFVPVKAKCIATLAPEPLVEHKHRTLILHLHPDHPTLLTTRSLGSDANPTRQWIERPTTVNFTVTGEGLEYTWGNHPPKRVWAQESGEGNPHGWPHEVVVYYYNRYPLTTIIGLCTCVAIIMVSCVHPCGSFAGLRNLCITPYKLAPNAQVPILLALLCCIKPTRADDTLQVLNYLWNNNQNFFWMQTLIPLAALIVCMRIVRCLFCCGPAFLLVCGAWAAAYEHTAVMPNKVGIPYKALVERPGYAPVHLQIQLVNTSIIPSTNLEYITCKYKTKVPSPVVKCCGATQCTSKPHPDYQCQVFTGVYPFMWGGAYCFCDTENTQMSEAYVERSEECSIDHAKAYKVHTGTVQAMVNITYGSVSWRSADVYVNGETPAKIGDAKLIIGPLSSAWSPFDNKVVVYGHEVYNYDFPEYGTGKAGSFGDLQSRTSTSNDLYANTNLKLQRPQAGIVHTPFTQAPSGFERWKRDKGAPLNDVAPFGCSIALEPLRAENCAVGSIPISIDIPDAAFTRISETPTVSDLECKITECTYASDFGGIATLPTNPVKQETVQFILHQVLQLLKRMTSPLLRAGSFTFHFSTANIHPAFKLQVCTSGVTCKGDCKPPKDHIVDYPAQHTESFTSAISATAWSWLKVLVGGTSAFIVLGLIATAVVALVLFFHRH.

Residues 1-35 form a necessary for nucleocapsid assembly and virus assembly region; sequence MFPYPTLNYPPMAPINPMAYRDPNPPRQVAPFRPP. Residues 1 to 102 form a disordered region; it reads MFPYPTLNYP…RKPKPGKRQR (102 aa). Residues 23 to 34 are compositionally biased toward pro residues; sequence PNPPRQVAPFRP. Residues 36-69 form a host transcription inhibition region; the sequence is LAAQIEDLRRSIANLTLKQRAPNPPAGPPAKRKK. Residues 43 to 50 carry the Supraphysiological nuclear export signal motif; it reads LRRSIANL. The N-linked (GlcNAc...) asparagine; by host glycan is linked to asparagine 49. Residues 65-102 are compositionally biased toward basic residues; the sequence is AKRKKPAPKPKPAQAKKKRPPPPAKKQKRKPKPGKRQR. The Nuclear localization signal signature appears at 66 to 70; it reads KRKKP. A binding to the viral RNA region spans residues 82–112; the sequence is KRPPPPAKKQKRKPKPGKRQRMCMKLESDKT. Residues 97–111 are ribosome-binding; the sequence is PGKRQRMCMKLESDK. A Phosphoserine modification is found at serine 109. The Peptidase S3 domain occupies 111–260; it reads KTFPIMLNGQ…KDTPEGSEPW (150 aa). A Phosphothreonine modification is found at threonine 112. Catalysis depends on charge relay system residues histidine 137, aspartate 159, and serine 211. The tract at residues 261–272 is functions as an uncleaved signal peptide for the precursor of protein E3/E2; that stretch reads SLATVMCVLANI. Residues 261 to 682 lie on the Extracellular side of the membrane; that stretch reads SLATVMCVLA…HEVVVYYYNR (422 aa). N-linked (GlcNAc...) asparagine; by host glycans are attached at residues asparagine 271 and asparagine 638. Residues 683–703 traverse the membrane as a helical segment; it reads YPLTTIIGLCTCVAIIMVSCV. Over 704–743 the chain is Cytoplasmic; it reads HPCGSFAGLRNLCITPYKLAPNAQVPILLALLCCIKPTRA. Residues cysteine 706, cysteine 716, cysteine 736, and cysteine 737 are each lipidated (S-palmitoyl cysteine; by host). A transient transmembrane before p62-6K protein processing region spans residues 715-735; it reads LCITPYKLAPNAQVPILLALL. Over 744-758 the chain is Extracellular; the sequence is DDTLQVLNYLWNNNQ. A helical membrane pass occupies residues 759-779; that stretch reads NFFWMQTLIPLAALIVCMRIV. Position 780 (arginine 780) is a topological domain, cytoplasmic. The helical transmembrane segment at 781–801 threads the bilayer; sequence CLFCCGPAFLLVCGAWAAAYE. Over 802–1216 the chain is Extracellular; sequence HTAVMPNKVG…WSWLKVLVGG (415 aa). Asparagine 834 carries an N-linked (GlcNAc...) asparagine; by host glycan. Cystine bridges form between cysteine 848–cysteine 913, cysteine 861–cysteine 893, cysteine 862–cysteine 895, and cysteine 867–cysteine 877. The E1 fusion peptide loop stretch occupies residues 883 to 900; sequence VYPFMWGGAYCFCDTENT. Asparagine 933 carries an N-linked (GlcNAc...) asparagine; by host glycan. Cystine bridges form between cysteine 1059–cysteine 1071, cysteine 1101–cysteine 1176, and cysteine 1106–cysteine 1180. The helical transmembrane segment at 1217-1237 threads the bilayer; the sequence is TSAFIVLGLIATAVVALVLFF. Topologically, residues 1238–1240 are cytoplasmic; that stretch reads HRH.

Part of a tetrameric complex composed of host CRM1, host importin alpha/beta dimer and the viral capsid; this complex blocks the receptor-mediated transport through the nuclear pore. Interacts with host phosphatase PPP1CA; this interaction dephosphorylates the capsid protein, which increases its ability to bind to the viral genome. Interacts with host karyopherin KPNA4; this interaction allows the nuclear import of the viral capsid protein. Interacts with spike glycoprotein E2. Interacts with host IRAK1; the interaction leads to inhibition of IRAK1-dependent signaling. As to quaternary structure, the precursor of protein E3/E2 and E1 form a heterodimer shortly after synthesis. In terms of assembly, the precursor of protein E3/E2 and E1 form a heterodimer shortly after synthesis. Processing of the precursor of protein E3/E2 into E2 and E3 results in a heterodimer of the spike glycoproteins E2 and E1. Spike at virion surface are constituted of three E2-E1 heterodimers. After target cell attachment and endocytosis, E1 change conformation to form homotrimers. Interacts with 6K protein. Processing of the precursor of protein E3/E2 into E2 and E3 results in a heterodimer of the spike glycoproteins E2 and E1. Spike at virion surface are constituted of three E2-E1 heterodimers. Interacts with 6K protein. As to quaternary structure, interacts with spike glycoprotein E1. Interacts with spike glycoprotein E2. In terms of processing, structural polyprotein: Specific enzymatic cleavages in vivo yield mature proteins. Capsid protein is auto-cleaved during polyprotein translation, unmasking a signal peptide at the N-terminus of the precursor of E3/E2. The remaining polyprotein is then targeted to the host endoplasmic reticulum, where host signal peptidase cleaves it into pE2, 6K and E1 proteins. pE2 is further processed to mature E3 and E2 by host furin in trans-Golgi vesicle. Phosphorylated on serine and threonine residues. Post-translationally, palmitoylated via thioester bonds. These palmitoylations may induce disruption of the C-terminus transmembrane. This would result in the reorientation of E2 C-terminus from lumenal to cytoplasmic side. In terms of processing, N-glycosylated. Palmitoylated via thioester bonds.

The protein localises to the virion. The protein resides in the host cytoplasm. Its subcellular location is the host cell membrane. It localises to the host nucleus. It is found in the virion membrane. It catalyses the reaction Autocatalytic release of the core protein from the N-terminus of the togavirus structural polyprotein by hydrolysis of a -Trp-|-Ser- bond.. Its function is as follows. Forms an icosahedral capsid with a T=4 symmetry composed of 240 copies of the capsid protein surrounded by a lipid membrane through which penetrate 80 spikes composed of trimers of E1-E2 heterodimers. The capsid protein binds to the viral RNA genome at a site adjacent to a ribosome binding site for viral genome translation following genome release. Possesses a protease activity that results in its autocatalytic cleavage from the nascent structural protein. Following its self-cleavage, the capsid protein transiently associates with ribosomes, and within several minutes the protein binds to viral RNA and rapidly assembles into icosahedric core particles. The resulting nucleocapsid eventually associates with the cytoplasmic domain of the spike glycoprotein E2 at the cell membrane, leading to budding and formation of mature virions. In case of infection, new virions attach to target cells and after clathrin-mediated endocytosis their membrane fuses with the host endosomal membrane. This leads to the release of the nucleocapsid into the cytoplasm, followed by an uncoating event necessary for the genomic RNA to become accessible. The uncoating might be triggered by the interaction of capsid proteins with ribosomes. Binding of ribosomes would release the genomic RNA since the same region is genomic RNA-binding and ribosome-binding. Specifically inhibits interleukin-1 receptor-associated kinase 1/IRAK1-dependent signaling during viral entry, representing a means by which the alphaviruses may evade innate immune detection and activation prior to viral gene expression. Inhibits host transcription. Forms a tetrameric complex with XPO1/CRM1 and the nuclear import receptor importin. This complex blocks the central channel of host nuclear pores thereby inhibiting the receptor-mediated nuclear transport and thus the host mRNA and rRNA transcription. The inhibition of transcription is linked to a cytopathic effect on the host cell. Provides the signal sequence for the translocation of the precursor of protein E3/E2 to the host endoplasmic reticulum. Furin-cleaved E3 remains associated with spike glycoprotein E1 and mediates pH protection of the latter during the transport via the secretory pathway. After virion release from the host cell, the assembly protein E3 is gradually released in the extracellular space. Functionally, plays a role in viral attachment to target host cell, by binding to the cell receptor. Synthesized as a p62 precursor which is processed by furin at the cell membrane just before virion budding, giving rise to E2-E1 heterodimer. The p62-E1 heterodimer is stable, whereas E2-E1 is unstable and dissociate at low pH. p62 is processed at the last step, presumably to avoid E1 fusion activation before its final export to cell surface. E2 C-terminus contains a transitory transmembrane that would be disrupted by palmitoylation, resulting in reorientation of the C-terminal tail from lumenal to cytoplasmic side. This step is critical since E2 C-terminus is involved in budding by interacting with capsid proteins. This release of E2 C-terminus in cytoplasm occurs lately in protein export, and precludes premature assembly of particles at the endoplasmic reticulum membrane. In terms of biological role, constitutive membrane protein involved in virus glycoprotein processing, cell permeabilization, and the budding of viral particles. Disrupts the calcium homeostasis of the cell, probably at the endoplasmic reticulum level. This leads to cytoplasmic calcium elevation. Because of its lipophilic properties, the 6K protein is postulated to influence the selection of lipids that interact with the transmembrane domains of the glycoproteins, which, in turn, affects the deformability of the bilayer required for the extreme curvature that occurs as budding proceeds. Present in low amount in virions, about 3% compared to viral glycoproteins. Its function is as follows. Class II viral fusion protein. Fusion activity is inactive as long as E1 is bound to E2 in mature virion. After virus attachment to target cell and endocytosis, acidification of the endosome would induce dissociation of E1/E2 heterodimer and concomitant trimerization of the E1 subunits. This E1 trimer is fusion active, and promotes release of viral nucleocapsid in cytoplasm after endosome and viral membrane fusion. Efficient fusion requires the presence of cholesterol and sphingolipid in the target membrane. Fusion is optimal at levels of about 1 molecule of cholesterol per 2 molecules of phospholipids, and is specific for sterols containing a 3-beta-hydroxyl group. The protein is Structural polyprotein of Eastern equine encephalitis virus (strain va33[ten broeck]) (EEEV).